We begin with the raw amino-acid sequence, 198 residues long: Probable GTP-binding protein EngB (198 aa).

An EngB-type G domain is found at 36-198; that stretch reads SDPQFAFIGR…NLSKLQELLE (163 aa). GTP-binding positions include 44–51, 70–74, 88–91, 155–158, and 182–184; these read GRSNVGKS, GRTQL, DLPG, NKID, and ISA. Mg(2+)-binding residues include Ser51 and Thr72.

Belongs to the TRAFAC class TrmE-Era-EngA-EngB-Septin-like GTPase superfamily. EngB GTPase family. Requires Mg(2+) as cofactor.

Functionally, necessary for normal cell division and for the maintenance of normal septation. The sequence is that of Probable GTP-binding protein EngB from Mesomycoplasma hyopneumoniae (strain J / ATCC 25934 / NCTC 10110) (Mycoplasma hyopneumoniae).